We begin with the raw amino-acid sequence, 443 residues long: Transcriptional adapter 2-alpha (443 aa).

Position 6 is a phosphoserine; in variant Ser-6 (proline 6). Residues 12–69 (SDKPPCRGCSSYLMEPYIKCAECGPPPFFLCLQCFTRGFEYKKHQSDHTYEIMTSDFP) form a ZZ-type zinc finger. Residues cysteine 17, cysteine 20, cysteine 31, cysteine 34, cysteine 42, cysteine 45, histidine 55, and histidine 59 each contribute to the Zn(2+) site. The region spanning 70–122 (VLDPSWTAQEEMALLEAVMDCGFGNWQDVANQMCTKTKEECEKHYMKHFINNP) is the SANT domain. Residues lysine 132 and lysine 138 each participate in a glycyl lysine isopeptide (Lys-Gly) (interchain with G-Cter in SUMO2) cross-link. The disordered stretch occupies residues 348 to 372 (SPSIPMASNSGRRSAPPLNLTGLPG). The 88-residue stretch at 356–443 (NSGRRSAPPL…LIREGYITKG (88 aa)) folds into the SWIRM domain. The DNA-binding element occupies 426-435 (KTRKIYDFLI).

In terms of assembly, interacts with GCN5 and NR3C1. Associated with the P/CAF protein in the PCAF complex. Component of the PCAF complex, at least composed of TADA2L/ADA2, TADA3L/ADA3, TAF5L/PAF65-beta, TAF6L/PAF65-alpha, TAF10/TAFII30, TAF12/TAFII20, TAF9/TAFII31 and TRRAP. Component of the ADA2A-containing complex (ATAC), composed of KAT14, KAT2A, TADA2L, TADA3L, ZZ3, MBIP, WDR5, YEATS2, CCDC101 and DR1. Interacts with CCDC134. Expressed in all tissues, but most abundantly in testis.

The protein resides in the nucleus. The protein localises to the chromosome. Functionally, component of the ATAC complex, a complex with histone acetyltransferase activity on histones H3 and H4. Required for the function of some acidic activation domains, which activate transcription from a distant site. Binds double-stranded DNA. Binds dinucleosomes, probably at the linker region between neighboring nucleosomes. Plays a role in chromatin remodeling. May promote TP53/p53 'Lys-321' acetylation, leading to reduced TP53 stability and transcriptional activity. May also promote XRCC6 acetylation thus facilitating cell apoptosis in response to DNA damage. The polypeptide is Transcriptional adapter 2-alpha (TADA2A) (Homo sapiens (Human)).